The following is a 179-amino-acid chain: Inner membrane-spanning protein YciB (179 aa).

5 helical membrane-spanning segments follow: residues 22-42 (IYAA…YSWV), 50-70 (MALI…FFHN), 76-96 (WKVT…QWVM), 121-141 (LAWA…AFWL), and 149-169 (FKVF…GIYI).

The protein belongs to the YciB family.

Its subcellular location is the cell inner membrane. Plays a role in cell envelope biogenesis, maintenance of cell envelope integrity and membrane homeostasis. This Klebsiella pneumoniae subsp. pneumoniae (strain ATCC 700721 / MGH 78578) protein is Inner membrane-spanning protein YciB.